A 223-amino-acid chain; its full sequence is Homeobox protein egl-5 (223 aa).

Low complexity predominate over residues 1–25; the sequence is MNTSTSAFDFGSSTASSAATSTTSS. Disordered stretches follow at residues 1–58 and 168–191; these read MNTS…STEA and KKEKQRVDDHTEHTPLLPANPPKG. Positions 112-171 form a DNA-binding region, homeobox; the sequence is SKKGRQTYQRYQTSVLEAKFQQSSYVSKKQREELRLQTQLTDRQIKIWFQNRRMKAKKEK.

The protein belongs to the Abd-B homeobox family. As to quaternary structure, interacts with the TCF transcription factor pop-1.

The protein localises to the nucleus. Its function is as follows. Involved in control of cell fate and pattern formation along the anterior-posterior axis, acting mainly in the tail. Required during embryonic and postembryonic development. Essential for the determination of specific neurons, including the PLM touch neurons. Plays a role in neural fate specification in the hermaphrodite-specific neuron (HSN)/PHB neuron lineage, acting in concert with T-box protein tbx-2 and the asymmetric cell division protein ham-1. Required for male gonadal fate determination, acting in parallel with a WNT/beta-catenin pathway, perhaps by recruiting pop-1 to male-specific gonadal target genes. Involved in development of the hermaphrodite hindgut, and for the response to rectal infection by the coryneform bacterium M.nematophilum. This is Homeobox protein egl-5 from Caenorhabditis elegans.